An 840-amino-acid polypeptide reads, in one-letter code: Leucine--tRNA ligase (840 aa).

A 'HIGH' region motif is present at residues 44–55; the sequence is PYPSANGLHVGH. Residues 617-621 carry the 'KMSKS' region motif; the sequence is KMSKS. Residue Lys620 coordinates ATP.

It belongs to the class-I aminoacyl-tRNA synthetase family.

The protein localises to the cytoplasm. It carries out the reaction tRNA(Leu) + L-leucine + ATP = L-leucyl-tRNA(Leu) + AMP + diphosphate. The polypeptide is Leucine--tRNA ligase (Borreliella burgdorferi (strain ATCC 35210 / DSM 4680 / CIP 102532 / B31) (Borrelia burgdorferi)).